The chain runs to 850 residues: MEKSKAKQGENEHMPVNNPSTQIYQLQALASELKTGFTEAMQELTRIQHGEYALEEKVKSCRCSMEEKVTEMKNSLNYFKEELSNAMSMIQAITSKQEEMQQKIEQLQQEKRRESRKVKAKKAQKEEHGAQAGPASAPAPGSAPTQGSPFRSINVPEAGLPSDDFTNMLPSQNYEKAQESRSVHVGDSNVKGMMGPGVNPTTPESDENLKPSLSAEIQSKGHHTPGLWRQPKEGKEWGEEYVTKDHPDKLKDAGQGRHSSLENVLCETSLAAKRQTVALELLESERKYVINISLILKIKATFQGSDGKRNPKERSLFPGSLRYLVQQHLDLLHALQERVLKWPRQGVLGDLFLKLTNDENNFLDYYVAYLRDLPECISLVHVVVLKEGDEEIKSDIYTLFFHIVQRIPEYLIHLQNVLKFTEQEHPDYYLLLVCVQRLRVFISHYTLLFQCNEDLLIQKRKKLKKSSMAKLYKGLASQCANAGQDASPNAGQEAVHDSGVHSEEMLQPYPSSSSSAPAVSHLMAPAKKGQQQQSLMESMQPGKPGDWELEGRKHERPESLLAPAQFCAAEQDVKALAGPLQAIPEMDFEPSSAEPLGNVERSLRGPPELLPDARGFVPAGYEEFEYGGEIFALPAPYDEEPFQAPALFDNCSPASSESSLDICFLRPVSFAMEAERPEHALQPLPKSATSPASSSGAYKLEAAQAQAHGKAKPLSRSLKEFPRTPPAEGVAPRLYSTRSSSGGRAPLKVERAPAPHGPAAAAAASRGAPRTFFPQQRSQSEKQTYLEEMHLEDATRFCPKEERESEQTSFSDQNPRQDQKGGFRSSFRKLFKKKNGNSTGEDFCGPWGWW.

2 stretches are compositionally biased toward basic and acidic residues: residues 1 to 13 (MEKSKAKQGENEH) and 98 to 113 (EEMQQKIEQLQQEKRR). Disordered regions lie at residues 1–21 (MEKSKAKQGENEHMPVNNPST) and 98–209 (EEMQ…DENL). Residues 54–128 (LEEKVKSCRC…KAKKAQKEEH (75 aa)) adopt a coiled-coil conformation. Residues 130-149 (AQAGPASAPAPGSAPTQGSP) show a composition bias toward low complexity. The segment covering 164 to 175 (DFTNMLPSQNYE) has biased composition (polar residues). The DH domain maps to 273-448 (KRQTVALELL…RVFISHYTLL (176 aa)). Disordered regions lie at residues 504 to 550 (EMLQ…WELE) and 702 to 850 (AAQA…WGWW). Composition is skewed to low complexity over residues 510 to 520 (PSSSSSAPAVS) and 754 to 770 (APHGPAAAAAASRGAPR). At arginine 766 the chain carries Omega-N-methylarginine. Polar residues predominate over residues 773-783 (FPQQRSQSEKQ). A compositionally biased stretch (basic and acidic residues) spans 784 to 806 (TYLEEMHLEDATRFCPKEERESE). A compositionally biased stretch (basic residues) spans 826–835 (SFRKLFKKKN).

The sequence is that of Rho guanine nucleotide exchange factor 33 (Arhgef33) from Mus musculus (Mouse).